We begin with the raw amino-acid sequence, 436 residues long: GTPase Der (436 aa).

EngA-type G domains lie at 4 to 167 and 176 to 351; these read PVIA…PKIE and IRFS…ESHS. GTP is bound by residues 10 to 17, 57 to 61, 119 to 122, 182 to 189, 229 to 233, and 294 to 297; these read GRPNVGKS, DTGGI, NKVD, DTAGM, and NKWD. The region spanning 352–436 is the KH-like domain; the sequence is IRVQTNVLND…PIHIIARARD (85 aa).

It belongs to the TRAFAC class TrmE-Era-EngA-EngB-Septin-like GTPase superfamily. EngA (Der) GTPase family. As to quaternary structure, associates with the 50S ribosomal subunit.

Its function is as follows. GTPase that plays an essential role in the late steps of ribosome biogenesis. The protein is GTPase Der of Bacillus cereus (strain G9842).